The following is a 366-amino-acid chain: Isocitrate dehydrogenase [NAD] subunit alpha, mitochondrial (366 aa).

The N-terminal 27 residues, 1–27, are a transit peptide targeting the mitochondrion; it reads MAGPAWISKVSRLLGAFHNPKQVTRGF. At K77 the chain carries N6-succinyllysine. T101 is modified (phosphothreonine). R115, R125, and R146 together coordinate substrate. N6-acetyllysine is present on K223. Mg(2+)-binding residues include D233, D257, and D261. K343 bears the N6-acetyllysine; alternate mark. At K343 the chain carries N6-succinyllysine; alternate. The residue at position 350 (K350) is an N6-succinyllysine.

Belongs to the isocitrate and isopropylmalate dehydrogenases family. In terms of assembly, heterooligomer of subunits alpha (IDH3A), beta (IDH3B), and gamma (IDH3G) in the apparent ratio of 2:1:1. The heterodimer containing one IDH3A and one IDH3B subunit and the heterodimer containing one IDH3A and one IDH3G subunit assemble into a heterotetramer (which contains two subunits of IDH3A, one of IDH3B and one of IDH3G) and further into the heterooctamer. Requires Mg(2+) as cofactor. It depends on Mn(2+) as a cofactor.

It localises to the mitochondrion. It carries out the reaction D-threo-isocitrate + NAD(+) = 2-oxoglutarate + CO2 + NADH. With respect to regulation, the heterotetramer and the heterodimer composed of IDH3A and IDH3G subunits can be allosterically activated by citrate (CIT) or/and ADP, and the two activators can act independently or synergistically. The heterodimer composed of IDH3A and IDH3B subunits cannot be allosterically regulated and the allosteric regulation of the heterotetramer is through the IDH3G subunit and not the IDH3B subunit. The IDH3G subunit contains the allosteric site which consists of a CIT-binding site and an ADP-binding site, and the binding of CIT and ADP causes conformational changes at the allosteric site which are transmitted to the active site in the catalytic subunit (IDH3A) through a cascade of conformational changes at the heterodimer interface, leading to stabilization of the isocitrate-binding at the active site and thus activation of the enzyme. ATP can activate the heterotetramer and the heterodimer composed of IDH3A and IDH3G subunits at low concentrations but inhibits their activities at high concentrations, whereas ATP exhibits only inhibitory effect on the heterodimer composed of IDH3A and IDH3B subunits. Catalytic subunit of the enzyme which catalyzes the decarboxylation of isocitrate (ICT) into alpha-ketoglutarate. The heterodimer composed of the alpha (IDH3A) and beta (IDH3B) subunits and the heterodimer composed of the alpha (IDH3A) and gamma (IDH3G) subunits, have considerable basal activity but the full activity of the heterotetramer (containing two subunits of IDH3A, one of IDH3B and one of IDH3G) requires the assembly and cooperative function of both heterodimers. The sequence is that of Isocitrate dehydrogenase [NAD] subunit alpha, mitochondrial from Homo sapiens (Human).